The chain runs to 268 residues: Inositol monophosphatase 3 (268 aa).

The Mg(2+) site is built by Glu71, Asp91, Leu93, and Asp94. Glu71 is a binding site for substrate. Residues 93–96 (LDGT), 194–196 (GSC), Glu213, and Asp221 contribute to the substrate site. Residue Asp221 participates in Mg(2+) binding.

It belongs to the inositol monophosphatase superfamily. Mg(2+) is required as a cofactor. In terms of tissue distribution, expressed in the shoot apex, roots, stems, leaves, flowers and young and mature green fruits.

It catalyses the reaction a myo-inositol phosphate + H2O = myo-inositol + phosphate. The protein operates within polyol metabolism; myo-inositol biosynthesis; myo-inositol from D-glucose 6-phosphate: step 2/2. Functionally, responsible for the provision of inositol required for synthesis of phosphatidylinositol and polyphosphoinositides. The chain is Inositol monophosphatase 3 (IMP3) from Solanum lycopersicum (Tomato).